A 104-amino-acid chain; its full sequence is ATP synthase subunit c (104 aa).

Transmembrane regions (helical) follow at residues 31 to 51 (SVVAAGIGLGLAALGGAIGMG) and 75 to 95 (MFIALAMIEAQVIYALVVAMI).

It belongs to the ATPase C chain family. F-type ATPases have 2 components, F(1) - the catalytic core - and F(0) - the membrane proton channel. F(1) has five subunits: alpha(3), beta(3), gamma(1), delta(1), epsilon(1). F(0) has three main subunits: a(1), b(2) and c(10-14). The alpha and beta chains form an alternating ring which encloses part of the gamma chain. F(1) is attached to F(0) by a central stalk formed by the gamma and epsilon chains, while a peripheral stalk is formed by the delta and b chains.

The protein resides in the cell inner membrane. Functionally, f(1)F(0) ATP synthase produces ATP from ADP in the presence of a proton or sodium gradient. F-type ATPases consist of two structural domains, F(1) containing the extramembraneous catalytic core and F(0) containing the membrane proton channel, linked together by a central stalk and a peripheral stalk. During catalysis, ATP synthesis in the catalytic domain of F(1) is coupled via a rotary mechanism of the central stalk subunits to proton translocation. Its function is as follows. Key component of the F(0) channel; it plays a direct role in translocation across the membrane. A homomeric c-ring of between 10-14 subunits forms the central stalk rotor element with the F(1) delta and epsilon subunits. The sequence is that of ATP synthase subunit c from Aliarcobacter butzleri (strain RM4018) (Arcobacter butzleri).